The following is a 149-amino-acid chain: Transcriptional regulator MraZ (149 aa).

2 SpoVT-AbrB domains span residues 7-54 (KYVN…GISH) and 83-126 (AVQL…QPQN).

It belongs to the MraZ family. As to quaternary structure, forms oligomers.

It localises to the cytoplasm. The protein localises to the nucleoid. The sequence is that of Transcriptional regulator MraZ from Rickettsia conorii (strain ATCC VR-613 / Malish 7).